A 449-amino-acid chain; its full sequence is Exodeoxyribonuclease 7 large subunit (449 aa).

Belongs to the XseA family. In terms of assembly, heterooligomer composed of large and small subunits.

The protein localises to the cytoplasm. The enzyme catalyses Exonucleolytic cleavage in either 5'- to 3'- or 3'- to 5'-direction to yield nucleoside 5'-phosphates.. In terms of biological role, bidirectionally degrades single-stranded DNA into large acid-insoluble oligonucleotides, which are then degraded further into small acid-soluble oligonucleotides. The polypeptide is Exodeoxyribonuclease 7 large subunit (Salmonella paratyphi B (strain ATCC BAA-1250 / SPB7)).